The primary structure comprises 391 residues: uncharacterized protein (391 aa).

The HTH arsR-type domain maps to 235–330 (VFILSRINLL…LYLKNETQKS (96 aa)).

This is an uncharacterized protein from Methanocaldococcus jannaschii (strain ATCC 43067 / DSM 2661 / JAL-1 / JCM 10045 / NBRC 100440) (Methanococcus jannaschii).